We begin with the raw amino-acid sequence, 549 residues long: MQADFVIIGSGSAGSALAYRLSEDGANSVVVLEFGGSDVGPFIQMPAALAWPMSMNRYNWGYLSEPEPNLNNRRITAPRGKVIGGSSSINGMVYVRGHSEDFDRWEELGAKGWAYADVLPYYKRMEHSHGGEEGWRGTDGPLHVQRGPVKNPLFHAFIEAGKQAGFEVTEDYNGSKQEGFGLMEQTTWRGRRWSAASAYLRPALKRPNVELVRCFARKIVIENGRATGVEIERGGRTEVVRANREVIVSASSFNSPKLLMLSGIGPAAHLQEMGIDVKADRPGVGQNLQDHMEFYFQQVSTKPVSLYSWLPWFWQGVAGAQWLFFKRGLGISNQFESCAFLRSAPGVKQPDIQYHFLPVAISYDGKAAAKSHGFQVHVGYNLSKSRGDVTLRSSDPKADPVIRFNYMSHPEDWEKFRHCVRLTREIFGQKAFDLYRGPEIQPGEKVRTDEEIDAFLREHLESAYHPCGTCKMGAKDDPMAVVDPETRVIGVDGLRVADSSIFPHITYGNLNAPSIMTGEKAADHILGKQPLARSNQEPWINPRWAVSDR.

4–33 (DFVIIGSGSAGSALAYRLSEDGANSVVVLE) serves as a coordination point for FAD. His-465 acts as the Proton acceptor in catalysis.

Belongs to the GMC oxidoreductase family. It depends on FAD as a cofactor.

The catalysed reaction is choline + A = betaine aldehyde + AH2. It catalyses the reaction betaine aldehyde + NAD(+) + H2O = glycine betaine + NADH + 2 H(+). The protein operates within amine and polyamine biosynthesis; betaine biosynthesis via choline pathway; betaine aldehyde from choline (cytochrome c reductase route): step 1/1. Involved in the biosynthesis of the osmoprotectant glycine betaine. Catalyzes the oxidation of choline to betaine aldehyde and betaine aldehyde to glycine betaine at the same rate. This is Oxygen-dependent choline dehydrogenase from Sinorhizobium medicae (strain WSM419) (Ensifer medicae).